A 164-amino-acid chain; its full sequence is tRNA (cytidine(34)-2'-O)-methyltransferase (164 aa).

Met80, Gly102, Val124, and Ser132 together coordinate S-adenosyl-L-methionine.

This sequence belongs to the class IV-like SAM-binding methyltransferase superfamily. RNA methyltransferase TrmH family. TrmL subfamily. In terms of assembly, homodimer.

It is found in the cytoplasm. It catalyses the reaction cytidine(34) in tRNA + S-adenosyl-L-methionine = 2'-O-methylcytidine(34) in tRNA + S-adenosyl-L-homocysteine + H(+). The catalysed reaction is 5-carboxymethylaminomethyluridine(34) in tRNA(Leu) + S-adenosyl-L-methionine = 5-carboxymethylaminomethyl-2'-O-methyluridine(34) in tRNA(Leu) + S-adenosyl-L-homocysteine + H(+). Functionally, methylates the ribose at the nucleotide 34 wobble position in the two leucyl isoacceptors tRNA(Leu)(CmAA) and tRNA(Leu)(cmnm5UmAA). Catalyzes the methyl transfer from S-adenosyl-L-methionine to the 2'-OH of the wobble nucleotide. The polypeptide is tRNA (cytidine(34)-2'-O)-methyltransferase (Polaromonas sp. (strain JS666 / ATCC BAA-500)).